Here is a 637-residue protein sequence, read N- to C-terminus: Neuroendocrine convertase 2 (637 aa).

An N-terminal signal peptide occupies residues 1-24 (MEGGCGSQWKAAGLLFCVMVFASA). Positions 25–108 (ERPVFTNHFL…QQEGFDRKKR (84 aa)) are excised as a propeptide. A Peptidase S8 domain is found at 128-452 (QWYLFNTGQA…YGVLDAGAMV (325 aa)). Active-site charge relay system residues include aspartate 166 and histidine 207. 2 disulfide bridges follow: cysteine 224/cysteine 375 and cysteine 316/cysteine 346. Asparagine 374 is a glycosylation site (N-linked (GlcNAc...) asparagine). The active-site Charge relay system is serine 383. The 137-residue stretch at 460 to 596 (TVPERFHCVG…TLMLHGTQSA (137 aa)) folds into the P/Homo B domain. A disulfide bridge links cysteine 467 with cysteine 493. N-linked (GlcNAc...) asparagine glycosylation is found at asparagine 513 and asparagine 523.

It belongs to the peptidase S8 family. Furin subfamily.

It localises to the cytoplasmic vesicle. The protein resides in the secretory vesicle. It is found in the secreted. The catalysed reaction is Release of protein hormones and neuropeptides from their precursors, generally by hydrolysis of -Lys-Arg-|- bonds.. Its function is as follows. Serine endopeptidase which is involved in the processing of hormone and other protein precursors at sites comprised of pairs of basic amino acid residues. Responsible for the release of glucagon from proglucagon in pancreatic A cells. The sequence is that of Neuroendocrine convertase 2 (Pcsk2) from Rattus norvegicus (Rat).